Reading from the N-terminus, the 212-residue chain is Pyrrolidone-carboxylate peptidase (212 aa).

Active-site residues include Glu80, Cys143, and His165.

Belongs to the peptidase C15 family. In terms of assembly, homotetramer.

It is found in the cytoplasm. The enzyme catalyses Release of an N-terminal pyroglutamyl group from a polypeptide, the second amino acid generally not being Pro.. In terms of biological role, removes 5-oxoproline from various penultimate amino acid residues except L-proline. The chain is Pyrrolidone-carboxylate peptidase from Vibrio vulnificus (strain CMCP6).